Here is a 343-residue protein sequence, read N- to C-terminus: Adenosine kinase (343 aa).

Residue Asp296 is part of the active site.

It belongs to the carbohydrate kinase PfkB family. Mg(2+) is required as a cofactor.

It catalyses the reaction adenosine + ATP = AMP + ADP + H(+). It functions in the pathway purine metabolism; AMP biosynthesis via salvage pathway; AMP from adenosine: step 1/1. Its function is as follows. ATP dependent phosphorylation of adenosine and other related nucleoside analogs to monophosphate derivatives. Can also act on the cytokinin isopentenyladenosine to produce isopentenyladenosine monophosphate. The sequence is that of Adenosine kinase (ADK) from Physcomitrium patens (Spreading-leaved earth moss).